The primary structure comprises 617 residues: Zinc metalloproteinase nas-36 (617 aa).

Positions 1-22 (MRLCHSIILFNSLISISICSKA) are cleaved as a signal peptide. The propeptide occupies 23 to 126 (DDPALLVASE…SKDKTKRLRR (104 aa)). In terms of domain architecture, Peptidase M12A spans 127-322 (SFVSDKTATW…VATINTAYCK (196 aa)). 9 cysteine pairs are disulfide-bonded: Cys-169/Cys-321, Cys-192/Cys-211, Cys-325/Cys-346, Cys-348/Cys-357, Cys-368/Cys-397, Cys-425/Cys-445, Cys-519/Cys-550, Cys-523/Cys-555, and Cys-535/Cys-540. The N-linked (GlcNAc...) asparagine glycan is linked to Asn-174. A Zn(2+)-binding site is contributed by His-219. Glu-220 is an active-site residue. 2 residues coordinate Zn(2+): His-223 and His-229. An EGF-like domain is found at 317-358 (NTAYCKDECKSEKTKCENGGYMRPSKCSECLCPDGLGGEKCE). Residues 368-482 (CGGIIKLTEE…IGFKIQAKST (115 aa)) enclose the CUB domain. One can recognise a TSP type-1 domain in the interval 507 to 556 (PNVWADWGEWSMCSRTCGGCGIRSRVRSCRSKKCEGRRQEFGTCNLKACP).

The cofactor is Zn(2+). In terms of tissue distribution, expressed in hypodermal cells. Also detected in the hypodermal seam cells in L4 larvae and young adults. In old adult hermaphrodites, it localizes to the vulva (at protein level).

Its subcellular location is the secreted. In terms of biological role, metalloprotease. Involved in molting, a process during larval stages in which a new cuticle is formed and the old cuticle is shed. The polypeptide is Zinc metalloproteinase nas-36 (nas-36) (Caenorhabditis elegans).